The sequence spans 219 residues: Intraflagellar transport protein 22 (219 aa).

GTP-binding positions include 12–19 (GPSKSGKS) and 72–79 (WDVGGSSK).

The protein belongs to the small GTPase superfamily. Rab family.

The protein localises to the cytoplasm. It localises to the cytoskeleton. The protein resides in the flagellum basal body. It is found in the cell projection. Its subcellular location is the cilium. The protein localises to the flagellum. Required for flagellum formation. In Trypanosoma brucei brucei (strain 927/4 GUTat10.1), this protein is Intraflagellar transport protein 22 (IFT22).